A 337-amino-acid polypeptide reads, in one-letter code: Cytoskeleton protein RodZ (337 aa).

The Cytoplasmic portion of the chain corresponds to 1–111 (MNTEATHDQN…LGKRRKKRDG (111 aa)). Residues 19 to 71 (LRNAREQLGLSQQAVAERLCLKVSTVRDIEEDKAPADLASTFLRGYIRSYARL) enclose the HTH cro/C1-type domain. The H-T-H motif DNA-binding region spans 30 to 49 (QQAVAERLCLKVSTVRDIEE). A helical; Signal-anchor for type II membrane protein membrane pass occupies residues 112-132 (WLMTFTWLVLFVVIGLSGAWW). The Periplasmic portion of the chain corresponds to 133–337 (WQDHKAQQEE…TLNAEQSPAQ (205 aa)). Polar residues predominate over residues 145-167 (TMADQSSAELSSNSEQGQSVPLN). The interval 145 to 236 (TMADQSSAEL…TAATTPDGAA (92 aa)) is disordered. Low complexity predominate over residues 168 to 207 (TSTTTDPATTSTPPASVDTTATNTQTPAVTAPAPAVDPQQ). Over residues 208 to 218 (NAVVSPSQANV) the composition is skewed to polar residues. Residues 219-236 (DTAATPAPTAATTPDGAA) are compositionally biased toward low complexity.

The protein belongs to the RodZ family.

Its subcellular location is the cell inner membrane. Its function is as follows. Cytoskeletal protein that is involved in cell-shape control through regulation of the length of the long axis. This is Cytoskeleton protein RodZ from Escherichia coli O139:H28 (strain E24377A / ETEC).